The following is a 184-amino-acid chain: Endothelial cell-specific molecule 1 (184 aa).

A signal peptide spans 1–19 (MKSVLLLTTLLVPAHLVAA). The IGFBP N-terminal domain occupies 24-102 (YAVDCPQHCD…GEEFGICKDC (79 aa)). 6 disulfide bridges follow: cysteine 28–cysteine 51, cysteine 32–cysteine 53, cysteine 37–cysteine 54, cysteine 43–cysteine 57, cysteine 65–cysteine 83, and cysteine 77–cysteine 99. An O-linked (Xyl...) (chondroitin sulfate) serine glycan is attached at serine 156.

Monomer. Post-translationally, may contain intrachain disulfide bonds. O-glycosylated; contains chondroitin sulfate and dermatan sulfate. As to expression, expressed in lung, on the vascular capillary network within alveolar walls, and also at lower level in kidney.

Its subcellular location is the secreted. Involved in angiogenesis; promotes angiogenic sprouting. May have potent implications in lung endothelial cell-leukocyte interactions. This Homo sapiens (Human) protein is Endothelial cell-specific molecule 1 (ESM1).